Consider the following 311-residue polypeptide: Probable manganese-dependent inorganic pyrophosphatase (311 aa).

Positions 9, 13, 15, 77, 99, and 151 each coordinate Mn(2+).

Belongs to the PPase class C family. Requires Mn(2+) as cofactor.

It is found in the cytoplasm. It catalyses the reaction diphosphate + H2O = 2 phosphate + H(+). The chain is Probable manganese-dependent inorganic pyrophosphatase from Streptococcus pneumoniae (strain JJA).